A 275-amino-acid chain; its full sequence is Aldo-keto reductase MSMEG_2408/MSMEI_2347 (275 aa).

Catalysis depends on Tyr-49, which acts as the Proton donor. 8 residues coordinate NADPH: Leu-189, Ile-227, Lys-229, Ser-230, Val-231, Arg-235, Ser-238, and Asn-239. Lys-262 is covalently cross-linked (Isoglutamyl lysine isopeptide (Lys-Gln) (interchain with Q-Cter in protein Pup)).

It belongs to the aldo/keto reductase family.

The chain is Aldo-keto reductase MSMEG_2408/MSMEI_2347 from Mycolicibacterium smegmatis (strain ATCC 700084 / mc(2)155) (Mycobacterium smegmatis).